The primary structure comprises 346 residues: Dehydrogenase azaJ (346 aa).

Position 43–48 (43–48) interacts with NADP(+); it reads VDYATQ. Residue 133-140 coordinates substrate; sequence LAFSTAIV. Residues 170–173, 193–196, Tyr211, and 251–252 contribute to the NADP(+) site; these read ATSV, SPHN, and LN. A substrate-binding site is contributed by 269 to 273; it reads APPNV. 336-337 provides a ligand contact to NADP(+); it reads VS.

It belongs to the zinc-containing alcohol dehydrogenase family.

It participates in secondary metabolite biosynthesis. Dehydrogenase; part of the gene cluster that mediates the biosynthesis of azaphilones, a class of fungal metabolites characterized by a highly oxygenated pyrano-quinone bicyclic core and exhibiting a broad range of bioactivities. In the first step, the non-reducing polyketide synthase azaA forms the hexaketide precursor from successive condensations of five malonyl-CoA units, presumably with a simple acetyl-CoA starter unit. The reactive polyketide chain then undergoes a PT-mediated C2-C7 cyclization to afford the aromatic ring and is eventually released as an aldehyde through the R-domain. The putative ketoreductase azaE is proposed to catalyze the reduction of the terminal ketone resulting in the early culture product FK17-P2a. The monooxygenase azaH was demonstrated to be the only enzyme required to convert FK17-P2a to azanigerone E. AzaH first hydroxylates the benzaldehyde intermediate FK17-P2a at C4, which triggers the formation of the pyran-ring to afford azanigerone E. In parallel, the 2,4-dimethylhexanoyl chain is synthesized by the HR-PKS azaB and is proposed to be transferred to the C4-hydroxyl of azanigerone E by the acyltransferase azaD directly from the ACP domain of azaB. Alternatively, the 2,4-dimethyl-hexanoyl chain may be offloaded from the HR-PKS as a carboxylic acid and converted to an acyl-CoA by azaF. The resulting acyl-CoA molecule could then be taken up as a substrate by AzaD to form azanigerone B. To yield the carboxylic acid substituent in azanigerone A, the hydroxypropyl side chain of azanigerone B would need to undergo a C-C oxidative cleavage catalyzed by cytochrome P450 AzaI. AzaI is proposed to act on a vicinal diol that leads to a C-C bond scission either through an alkoxyradical intermediate or a peroxy complex. In the biosynthesis of azanigerone A, azanigerone B first undergoes hydroxylation at C10, possibly catalyzed by one of the two FAD-dependent monooxygenases encoded in the cluster, azaG or azaL, resulting in the vicinal diol azanigerone C. Oxidative cleavage of azanigerone C by azaI would yield the corresponding aldehyde derivative of azanigerone A. Finally, the dehydrogenase azaJ is proposed to convert the aldehyde functional group into the carboxylic acid, completing the conversion from azanigerone B to azanigerone A. Alternatively, the oxidation of aldehyde to carboxylic acid may be catalyzed by the same P450 enzyme azaI via consecutive oxidation or by endogenous alcohol dehydrogenase. This chain is Dehydrogenase azaJ, found in Aspergillus niger (strain ATCC 1015 / CBS 113.46 / FGSC A1144 / LSHB Ac4 / NCTC 3858a / NRRL 328 / USDA 3528.7).